Consider the following 1756-residue polypeptide: Transposon Ty1-BR Gag-Pol polyprotein (1756 aa).

3 stretches are compositionally biased toward polar residues: residues 1–10, 48–60, and 127–152; these read MESQQLSNYP, TKAN…TPAS, and QSQF…GNTF. Disordered stretches follow at residues 1–93, 126–173, and 352–421; these read MESQ…MMTQ, PQSQ…RPPP, and GSRN…SKST. Low complexity predominate over residues 153-165; it reads TDSSSADSDMTST. The segment at 299-401 is RNA-binding; that stretch reads NNGIHINNKV…NSKSKTARAH (103 aa). Low complexity predominate over residues 402-418; that stretch reads NVSTSNNSPSTDNDSIS. Ser-416 carries the phosphoserine modification. Asp-461 acts as the For protease activity; shared with dimeric partner in catalysis. Residues 583–640 are integrase-type zinc finger-like; that stretch reads NVHTSESTRKYPYPFIHRMLAHANAQTIRYSLKNNTITYFNESDVDWSSAIDYQCPDC. The 176-residue stretch at 660–835 folds into the Integrase catalytic domain; it reads NSYEPFQYLH…AGLDISTLLP (176 aa). Mg(2+) is bound by residues Asp-671 and Asp-736. 2 disordered regions span residues 956–1088 and 1142–1173; these read SKAV…TEKR and PTEL…SNAY. The span at 960–969 shows a compositional bias: low complexity; it reads SPTDSTPPST. Polar residues-rich tracts occupy residues 1005–1017 and 1031–1043; these read STPQ…STDS and MSQS…SYAS. Positions 1044–1053 are enriched in basic and acidic residues; it reads KSKDFRHSDS. Over residues 1054–1082 the composition is skewed to polar residues; it reads YSDNETNHTNVPISSTGGTNNKTVPQTSE. A Bipartite nuclear localization signal motif is present at residues 1179 to 1213; it reads KKRSLEDNETEIKVSRDTWNTKNMRSLEPPRSKKR. Residues 1339 to 1477 form the Reverse transcriptase Ty1/copia-type domain; the sequence is NNYYITQLDI…DILGLEIKYQ (139 aa). Mg(2+) is bound by residues Asp-1347, Asp-1428, Asp-1429, Asp-1611, Glu-1653, and Asp-1686. The RNase H Ty1/copia-type domain maps to 1611 to 1753; it reads DASYGNQPYY…IKTFKLLTNK (143 aa).

The capsid protein forms a homotrimer, from which the VLPs are assembled. The protease is a homodimer, whose active site consists of two apposed aspartic acid residues. Initially, virus-like particles (VLPs) are composed of the structural unprocessed proteins Gag and Gag-Pol, and also contain the host initiator methionine tRNA (tRNA(i)-Met) which serves as a primer for minus-strand DNA synthesis, and a dimer of genomic Ty RNA. Processing of the polyproteins occurs within the particle and proceeds by an ordered pathway, called maturation. First, the protease (PR) is released by autocatalytic cleavage of the Gag-Pol polyprotein yielding capsid protein p45 and a Pol-p154 precursor protein. This cleavage is a prerequisite for subsequent processing of Pol-p154 at the remaining sites to release the mature structural and catalytic proteins. Maturation takes place prior to the RT reaction and is required to produce transposition-competent VLPs.

Its subcellular location is the cytoplasm. The protein localises to the nucleus. It carries out the reaction DNA(n) + a 2'-deoxyribonucleoside 5'-triphosphate = DNA(n+1) + diphosphate. The enzyme catalyses Endonucleolytic cleavage to 5'-phosphomonoester.. Its function is as follows. Capsid protein (CA) is the structural component of the virus-like particle (VLP), forming the shell that encapsulates the retrotransposons dimeric RNA genome. The particles are assembled from trimer-clustered units and there are holes in the capsid shells that allow for the diffusion of macromolecules. CA also has nucleocapsid-like chaperone activity, promoting primer tRNA(i)-Met annealing to the multipartite primer-binding site (PBS), dimerization of Ty1 RNA and initiation of reverse transcription. The aspartyl protease (PR) mediates the proteolytic cleavages of the Gag and Gag-Pol polyproteins after assembly of the VLP. In terms of biological role, reverse transcriptase/ribonuclease H (RT) is a multifunctional enzyme that catalyzes the conversion of the retro-elements RNA genome into dsDNA within the VLP. The enzyme displays a DNA polymerase activity that can copy either DNA or RNA templates, and a ribonuclease H (RNase H) activity that cleaves the RNA strand of RNA-DNA heteroduplexes during plus-strand synthesis and hydrolyzes RNA primers. The conversion leads to a linear dsDNA copy of the retrotransposon that includes long terminal repeats (LTRs) at both ends. Functionally, integrase (IN) targets the VLP to the nucleus, where a subparticle preintegration complex (PIC) containing at least integrase and the newly synthesized dsDNA copy of the retrotransposon must transit the nuclear membrane. Once in the nucleus, integrase performs the integration of the dsDNA into the host genome. The protein is Transposon Ty1-BR Gag-Pol polyprotein (TY1B-BR) of Saccharomyces cerevisiae (strain ATCC 204508 / S288c) (Baker's yeast).